Consider the following 21-residue polypeptide: 40 kDa major outer membrane protein (21 aa).

In terms of assembly, disulfide bond interactions within and between MOMP molecules and other components form high molecular-weight oligomers.

It is found in the cell outer membrane. Functionally, structural rigidity of the outer membrane of elementary bodies and porin forming, permitting diffusion of solutes through the intracellular reticulate body membrane. The protein is 40 kDa major outer membrane protein of Actinobacillus pleuropneumoniae (Haemophilus pleuropneumoniae).